We begin with the raw amino-acid sequence, 132 residues long: Small ribosomal subunit protein uS8 (132 aa).

Belongs to the universal ribosomal protein uS8 family. Part of the 30S ribosomal subunit. Contacts proteins S5 and S12.

Its function is as follows. One of the primary rRNA binding proteins, it binds directly to 16S rRNA central domain where it helps coordinate assembly of the platform of the 30S subunit. This chain is Small ribosomal subunit protein uS8, found in Natranaerobius thermophilus (strain ATCC BAA-1301 / DSM 18059 / JW/NM-WN-LF).